The chain runs to 166 residues: Cofilin-2 (166 aa).

Position 2 is an N-acetylalanine (A2). Residue S3 is modified to Phosphoserine. Residues 4–153 (GVTVNDEVIK…KDRSTLGEKL (150 aa)) enclose the ADF-H domain. T6 is modified (phosphothreonine). A Nuclear localization signal motif is present at residues 30–34 (KKRKK).

Belongs to the actin-binding proteins ADF family. Post-translationally, the phosphorylation of Ser-24 may prevent recognition of the nuclear localization signal.

It is found in the nucleus matrix. It localises to the cytoplasm. Its subcellular location is the cytoskeleton. Controls reversibly actin polymerization and depolymerization in a pH-sensitive manner. It has the ability to bind G- and F-actin in a 1:1 ratio of cofilin to actin. It is the major component of intranuclear and cytoplasmic actin rods. In Bos taurus (Bovine), this protein is Cofilin-2 (CFL2).